The sequence spans 605 residues: Podocalyxin-like protein 2 (605 aa).

Residues 1–32 form the signal peptide; it reads MGRLLRAARLPPLLSPLLLLLVGGAFLGACVA. Residues 33–500 are Extracellular-facing; sequence GSDEPGPEGL…ASQVRSDYGT (468 aa). O-linked (Xyl...) (chondroitin sulfate) serine glycosylation is present at serine 79. A sulfotyrosine mark is found at tyrosine 97 and tyrosine 118. The O-glycosylated at one site stretch occupies residues 129-134; that stretch reads SIEDTS. The interval 129–347 is disordered; it reads SIEDTSQAQE…PGDMELTPSS (219 aa). The O-linked (GalNAc...) serine glycan is linked to serine 144. Residues 162–189 are compositionally biased toward acidic residues; that stretch reads EEEEEEEEEEEREKEEVEKQEEEEEEEL. Asparagine 193 carries N-linked (GlcNAc...) asparagine glycosylation. Polar residues predominate over residues 207 to 217; that stretch reads SLTSSSQTPGA. 2 stretches are compositionally biased toward low complexity: residues 241–255 and 288–298; these read PSLL…TVTP and EATAGAAGLSG. Asparagine 395 carries an N-linked (GlcNAc...) asparagine glycan. The helical transmembrane segment at 501 to 521 threads the bilayer; that stretch reads LFVVLVVIGAICIIIIALGLL. The Cytoplasmic segment spans residues 522–605; it reads YNCWQRRLPK…SDVFEEDTHL (84 aa). Residues 554–605 form a disordered region; that stretch reads LDVASDSQSEMQEKHPSLNGGGALNGPGSWGALMGGKRDPEDSDVFEEDTHL. At serine 570 the chain carries Phosphoserine. Residues 572–582 show a composition bias toward gly residues; the sequence is NGGGALNGPGS. Residues 594–605 are compositionally biased toward acidic residues; it reads EDSDVFEEDTHL. Phosphoserine is present on serine 596.

Belongs to the podocalyxin family. Homodimer; disulfide-linked. Interacts with SELL, SELE and SELP. In terms of processing, O-glycosylated; contains chondroitin sulfate. Displays sialylated O-linked oligosaccharides. Sulfation is necessary for interaction with SELL. Sialylated O-linked oligosaccharides are necessary for interaction with SELL, SELE and SELP. In terms of tissue distribution, expressed in T-cells, B-cells and monocytes. Expression is higher on memory and germinal center cells than on naive B-cells (at protein level). Highly expressed in brain. Moderately expressed in pancreas, kidney and lymphoid node. Weakly expressed in liver. Detected in both endothelial cells and CD34+ bone marrow cells.

It is found in the membrane. Its function is as follows. Acts as a ligand for vascular selectins. Mediates rapid rolling of leukocytes over vascular surfaces through high affinity divalent cation-dependent interactions with E-, P- and L-selectins. The polypeptide is Podocalyxin-like protein 2 (PODXL2) (Homo sapiens (Human)).